A 94-amino-acid polypeptide reads, in one-letter code: Small ubiquitin-related modifier 3 (94 aa).

Lys-11 participates in a covalent cross-link: Glycyl lysine isopeptide (Lys-Gly) (interchain with G-Cter in SUMO). In terms of domain architecture, Ubiquitin-like spans 15-92; that stretch reads DHINLKVAGQ…IDVFQQQTGG (78 aa). A Glycyl lysine isopeptide (Gly-Lys) (interchain with K-? in acceptor proteins) cross-link involves residue Gly-92. The propeptide occupies 93-94; that stretch reads SC.

It belongs to the ubiquitin family. SUMO subfamily. Interacts with sae2 and ube2i. Covalently attached to a number of proteins. Post-translationally, polymeric chains can be formed through Lys-11 cross-linking. In terms of processing, cleavage of precursor form by a sentrin-specific protease is necessary for function.

The protein localises to the cytoplasm. It localises to the nucleus. It is found in the PML body. Ubiquitin-like protein which can be covalently attached to target lysines either as a monomer or as a lysine-linked polymer. Does not seem to be involved in protein degradation and may function as an antagonist of ubiquitin in the degradation process. Plays a role in a number of cellular processes such as nuclear transport, DNA replication and repair, mitosis and signal transduction. Covalent attachment to its substrates requires prior activation by the E1 complex sae1-sae2 and linkage to the E2 enzyme ube2i. This Danio rerio (Zebrafish) protein is Small ubiquitin-related modifier 3 (sumo3).